A 504-amino-acid chain; its full sequence is L-amino-acid oxidase (504 aa).

Residues 1–18 (MNVFFMFSLLFLAALGSC) form the signal peptide. Cysteines 28 and 191 form a disulfide. FAD is bound by residues 61-62 (MS), 81-82 (EA), Arg-89, and 105-108 (GPMR). Arg-108 provides a ligand contact to substrate. The N-linked (GlcNAc...) asparagine glycan is linked to Asn-190. His-241 contributes to the substrate binding site. Residue Val-279 participates in FAD binding. A disulfide bridge links Cys-349 with Cys-430. N-linked (GlcNAc...) asparagine glycosylation occurs at Asn-379. Tyr-390 is a substrate binding site. FAD is bound by residues Glu-475 and 482-487 (GWIDST). Substrate is bound at residue 482–483 (GW).

It belongs to the flavin monoamine oxidase family. FIG1 subfamily. As to quaternary structure, homodimer; non-covalently linked. The cofactor is FAD. In terms of tissue distribution, expressed by the venom gland.

The protein localises to the secreted. The enzyme catalyses an L-alpha-amino acid + O2 + H2O = a 2-oxocarboxylate + H2O2 + NH4(+). The catalysed reaction is L-leucine + O2 + H2O = 4-methyl-2-oxopentanoate + H2O2 + NH4(+). Catalyzes an oxidative deamination of predominantly hydrophobic and aromatic L-amino acids, thus producing hydrogen peroxide that may contribute to the diverse toxic effects of this enzyme. Shows activity on L-Leu. Exhibits diverse biological activities, such as apoptosis, and inhibition of agonist- and shear stress-induced platelet aggregation (SIPA). Effects of snake L-amino oxidases on platelets are controversial, since they either induce aggregation or inhibit agonist-induced aggregation. These different effects are probably due to different experimental conditions. This protein may also induce hemorrhage, hemolysis, edema, antibacterial and antiparasitic activities. The sequence is that of L-amino-acid oxidase from Gloydius blomhoffii (Mamushi).